The sequence spans 560 residues: Mannosyl-oligosaccharide 1,2-alpha-mannosidase MNS1 (560 aa).

Topologically, residues 1–27 (MARSRSISGYGIWKYLNPAYYLRRPRR) are cytoplasmic. Residues 28 to 47 (LALLFIVFVSVSMLVWDRIN) traverse the membrane as a helical; Signal-anchor for type II membrane protein segment. A coiled-coil region spans residues 47–80 (NLAREHEVEVFKLNEEVSRLEQMLEELNGGVGNK). Residues 48 to 560 (LAREHEVEVF…QRKFGHQINV (513 aa)) are Lumenal-facing. The Proton donor role is filled by Glu-179. Asp-312 is a catalytic residue. Asn-326 is a glycosylation site (N-linked (GlcNAc...) asparagine). Cysteines 377 and 409 form a disulfide. Glu-423 acts as the Proton donor in catalysis. Glu-445 is an active-site residue. An N-linked (GlcNAc...) asparagine glycan is attached at Asn-459. Thr-529 is a binding site for Ca(2+).

It belongs to the glycosyl hydrolase 47 family. The cofactor is Ca(2+). Requires Mn(2+) as cofactor. It depends on Mg(2+) as a cofactor. Expressed in flowers, siliques, stems, leaves, roots, pollen grains, shoot apical meristems, hypocotyls and upper region of the root.

The protein resides in the golgi apparatus membrane. It carries out the reaction N(4)-(alpha-D-Man-(1-&gt;2)-alpha-D-Man-(1-&gt;2)-alpha-D-Man-(1-&gt;3)-[alpha-D-Man-(1-&gt;2)-alpha-D-Man-(1-&gt;3)-[alpha-D-Man-(1-&gt;2)-alpha-D-Man-(1-&gt;6)]-alpha-D-Man-(1-&gt;6)]-beta-D-Man-(1-&gt;4)-beta-D-GlcNAc-(1-&gt;4)-beta-D-GlcNAc)-L-asparaginyl-[protein] (N-glucan mannose isomer 9A1,2,3B1,2,3) + 4 H2O = N(4)-(alpha-D-Man-(1-&gt;3)-[alpha-D-Man-(1-&gt;3)-[alpha-D-Man-(1-&gt;6)]-alpha-D-Man-(1-&gt;6)]-beta-D-Man-(1-&gt;4)-beta-D-GlcNAc-(1-&gt;4)-beta-D-GlcNAc)-L-asparaginyl-[protein] (N-glucan mannose isomer 5A1,2) + 4 beta-D-mannose. It catalyses the reaction N(4)-(alpha-D-Man-(1-&gt;2)-alpha-D-Man-(1-&gt;2)-alpha-D-Man-(1-&gt;3)-[alpha-D-Man-(1-&gt;3)-[alpha-D-Man-(1-&gt;2)-alpha-D-Man-(1-&gt;6)]-alpha-D-Man-(1-&gt;6)]-beta-D-Man-(1-&gt;4)-beta-D-GlcNAc-(1-&gt;4)-beta-D-GlcNAc)-L-asparaginyl-[protein] (N-glucan mannose isomer 8A1,2,3B1,3) + 3 H2O = N(4)-(alpha-D-Man-(1-&gt;3)-[alpha-D-Man-(1-&gt;3)-[alpha-D-Man-(1-&gt;6)]-alpha-D-Man-(1-&gt;6)]-beta-D-Man-(1-&gt;4)-beta-D-GlcNAc-(1-&gt;4)-beta-D-GlcNAc)-L-asparaginyl-[protein] (N-glucan mannose isomer 5A1,2) + 3 beta-D-mannose. The enzyme catalyses N(4)-(alpha-D-Man-(1-&gt;2)-alpha-D-Man-(1-&gt;2)-alpha-D-Man-(1-&gt;3)-[alpha-D-Man-(1-&gt;2)-alpha-D-Man-(1-&gt;3)-[alpha-D-Man-(1-&gt;2)-alpha-D-Man-(1-&gt;6)]-alpha-D-Man-(1-&gt;6)]-beta-D-Man-(1-&gt;4)-beta-D-GlcNAc-(1-&gt;4)-beta-D-GlcNAc)-L-asparaginyl-[protein] (N-glucan mannose isomer 9A1,2,3B1,2,3) + H2O = N(4)-(alpha-D-Man-(1-&gt;2)-alpha-D-Man-(1-&gt;2)-alpha-D-Man-(1-&gt;3)-[alpha-D-Man-(1-&gt;3)-[alpha-D-Man-(1-&gt;2)-alpha-D-Man-(1-&gt;6)]-alpha-D-Man-(1-&gt;6)]-beta-D-Man-(1-&gt;4)-beta-D-GlcNAc-(1-&gt;4)-beta-D-GlcNAc)-L-asparaginyl-[protein] (N-glucan mannose isomer 8A1,2,3B1,3) + beta-D-mannose. It functions in the pathway protein modification; protein glycosylation. Inhibited by kifunensine and 1-deoxymannojirimycin, but not by swainsonine. In terms of biological role, class I alpha-mannosidase essential for early N-glycan processing. Progressively trims alpha-1,2-linked mannose residues. Produces Man(5)GlcNAc(2) from Man(8)GlcNAc(2), but only Man(6)GlcNAc(2) from Man(9)GlcNAc(2). Has difficulty acting on the terminal mannose of the b-branch. Involved in root development and cell wall biosynthesis. The chain is Mannosyl-oligosaccharide 1,2-alpha-mannosidase MNS1 (MNS1) from Arabidopsis thaliana (Mouse-ear cress).